A 470-amino-acid chain; its full sequence is MTELPDNTRWQLWIVAFGFFMQSLDTTIVNTALPSMAKSLGESPLHMHMVVVSYVLTVAVMLPASGWLADKIGVRNIFFAAIVLFTLGSLFCALSGTLNQLVLARVLQGVGGAMMVPVGRLTVMKIVPRAQYMAAMTFVTLPGQIGPLLGPALGGVLVEYASWHWIFLINIPVGIVGAMATFMLMPNYIIETRRFDLPGFLLLAIGMAVLTLALDGSKSMGISPWTLAGLAAGGAAAILLYLFHAKKNSGALFSLRLFRTPTFSLGLLGSFAGRIGSGMLPFMTPVFLQIGLGFSPFHAGLMMIPMVLGSMGMKRIVVQIVNRFGYRRVLVATTLGLALVSLLFMSVALLGWYYLLPLVLLLQGMVNSARFSSMNTLTLKDLPDTLASSGNSLLSMIMQLSMSIGVTIAGMLLGMFGQQHIGIDSSATHHVFMYTWLCMAVIIALPAIIFARVPNDTQQNMVISRRKRSL.

Over 1-11 the chain is Periplasmic; the sequence is MTELPDNTRWQ. The helical transmembrane segment at 12–32 threads the bilayer; sequence LWIVAFGFFMQSLDTTIVNTA. The Cytoplasmic portion of the chain corresponds to 33–48; that stretch reads LPSMAKSLGESPLHMH. The helical transmembrane segment at 49–69 threads the bilayer; that stretch reads MVVVSYVLTVAVMLPASGWLA. Residues 70 to 76 lie on the Periplasmic side of the membrane; sequence DKIGVRN. A helical membrane pass occupies residues 77-97; that stretch reads IFFAAIVLFTLGSLFCALSGT. At 98 to 101 the chain is on the cytoplasmic side; that stretch reads LNQL. Residues 102–124 form a helical membrane-spanning segment; the sequence is VLARVLQGVGGAMMVPVGRLTVM. Topologically, residues 125-137 are periplasmic; sequence KIVPRAQYMAAMT. Residues 138–158 traverse the membrane as a helical segment; the sequence is FVTLPGQIGPLLGPALGGVLV. Residues 159-164 lie on the Cytoplasmic side of the membrane; sequence EYASWH. Residues 165–185 form a helical membrane-spanning segment; the sequence is WIFLINIPVGIVGAMATFMLM. Residues 186 to 196 are Periplasmic-facing; the sequence is PNYIIETRRFD. A helical transmembrane segment spans residues 197–217; that stretch reads LPGFLLLAIGMAVLTLALDGS. The Cytoplasmic portion of the chain corresponds to 218–224; that stretch reads KSMGISP. The chain crosses the membrane as a helical span at residues 225 to 245; that stretch reads WTLAGLAAGGAAAILLYLFHA. Over 246-262 the chain is Periplasmic; that stretch reads KKNSGALFSLRLFRTPT. A helical membrane pass occupies residues 263–283; it reads FSLGLLGSFAGRIGSGMLPFM. Residues 284–285 are Cytoplasmic-facing; the sequence is TP. The chain crosses the membrane as a helical span at residues 286–306; the sequence is VFLQIGLGFSPFHAGLMMIPM. Residues 307-341 are Periplasmic-facing; that stretch reads VLGSMGMKRIVVQIVNRFGYRRVLVATTLGLALVS. A helical transmembrane segment spans residues 342-362; the sequence is LLFMSVALLGWYYLLPLVLLL. The Cytoplasmic portion of the chain corresponds to 363 to 395; that stretch reads QGMVNSARFSSMNTLTLKDLPDTLASSGNSLLS. The chain crosses the membrane as a helical span at residues 396-416; the sequence is MIMQLSMSIGVTIAGMLLGMF. At 417 to 430 the chain is on the periplasmic side; the sequence is GQQHIGIDSSATHH. A helical transmembrane segment spans residues 431–451; the sequence is VFMYTWLCMAVIIALPAIIFA. At 452-470 the chain is on the cytoplasmic side; it reads RVPNDTQQNMVISRRKRSL.

Belongs to the major facilitator superfamily. TCR/Tet family.

Its subcellular location is the cell inner membrane. This is Putative multidrug resistance protein MdtD from Salmonella typhimurium (strain LT2 / SGSC1412 / ATCC 700720).